Here is a 90-residue protein sequence, read N- to C-terminus: Small ribosomal subunit protein uS17 (90 aa).

Belongs to the universal ribosomal protein uS17 family. In terms of assembly, part of the 30S ribosomal subunit.

In terms of biological role, one of the primary rRNA binding proteins, it binds specifically to the 5'-end of 16S ribosomal RNA. The sequence is that of Small ribosomal subunit protein uS17 from Paraburkholderia phytofirmans (strain DSM 17436 / LMG 22146 / PsJN) (Burkholderia phytofirmans).